The primary structure comprises 364 residues: Biotin synthase (364 aa).

The segment at 14–36 (DTIPPGTETPYASPSHARTEEAP) is disordered. The Radical SAM core domain maps to 70-308 (RKGPLATTCG…QRDILVCGGR (239 aa)). [4Fe-4S] cluster is bound by residues Cys88, Cys92, and Cys95. Positions 164 and 233 each coordinate [2Fe-2S] cluster.

This sequence belongs to the radical SAM superfamily. Biotin synthase family. As to quaternary structure, homodimer. It depends on [4Fe-4S] cluster as a cofactor. Requires [2Fe-2S] cluster as cofactor.

The enzyme catalyses (4R,5S)-dethiobiotin + (sulfur carrier)-SH + 2 reduced [2Fe-2S]-[ferredoxin] + 2 S-adenosyl-L-methionine = (sulfur carrier)-H + biotin + 2 5'-deoxyadenosine + 2 L-methionine + 2 oxidized [2Fe-2S]-[ferredoxin]. It functions in the pathway cofactor biosynthesis; biotin biosynthesis; biotin from 7,8-diaminononanoate: step 2/2. Its function is as follows. Catalyzes the conversion of dethiobiotin (DTB) to biotin by the insertion of a sulfur atom into dethiobiotin via a radical-based mechanism. The protein is Biotin synthase of Nitratidesulfovibrio vulgaris (strain DSM 19637 / Miyazaki F) (Desulfovibrio vulgaris).